Here is a 336-residue protein sequence, read N- to C-terminus: Heme A synthase (336 aa).

5 helical membrane-spanning segments follow: residues 5–25 (LTRW…VGGI), 92–112 (GRAT…KGII), 117–137 (ILSY…GWYM), 153–173 (LAFH…KLVK), and 191–211 (LIFS…GALV). Histidine 255 is a binding site for heme. Transmembrane regions (helical) follow at residues 257–277 (LGAY…LKVK), 284–304 (VAFY…ITLL), and 307–327 (VPII…SVVI). Histidine 315 is a binding site for heme.

This sequence belongs to the COX15/CtaA family. Type 2 subfamily. As to quaternary structure, interacts with CtaB. The cofactor is heme b.

Its subcellular location is the cell membrane. The catalysed reaction is Fe(II)-heme o + 2 A + H2O = Fe(II)-heme a + 2 AH2. It functions in the pathway porphyrin-containing compound metabolism; heme A biosynthesis; heme A from heme O: step 1/1. Catalyzes the conversion of heme O to heme A by two successive hydroxylations of the methyl group at C8. The first hydroxylation forms heme I, the second hydroxylation results in an unstable dihydroxymethyl group, which spontaneously dehydrates, resulting in the formyl group of heme A. The sequence is that of Heme A synthase from Rickettsia bellii (strain OSU 85-389).